A 187-amino-acid polypeptide reads, in one-letter code: ATP synthase subunit b 2 (187 aa).

Residues Ser39–Pro61 traverse the membrane as a helical segment.

The protein belongs to the ATPase B chain family. F-type ATPases have 2 components, F(1) - the catalytic core - and F(0) - the membrane proton channel. F(1) has five subunits: alpha(3), beta(3), gamma(1), delta(1), epsilon(1). F(0) has three main subunits: a(1), b(2) and c(10-14). The alpha and beta chains form an alternating ring which encloses part of the gamma chain. F(1) is attached to F(0) by a central stalk formed by the gamma and epsilon chains, while a peripheral stalk is formed by the delta and b chains.

Its subcellular location is the cell inner membrane. Its function is as follows. F(1)F(0) ATP synthase produces ATP from ADP in the presence of a proton or sodium gradient. F-type ATPases consist of two structural domains, F(1) containing the extramembraneous catalytic core and F(0) containing the membrane proton channel, linked together by a central stalk and a peripheral stalk. During catalysis, ATP synthesis in the catalytic domain of F(1) is coupled via a rotary mechanism of the central stalk subunits to proton translocation. Component of the F(0) channel, it forms part of the peripheral stalk, linking F(1) to F(0). In Parvibaculum lavamentivorans (strain DS-1 / DSM 13023 / NCIMB 13966), this protein is ATP synthase subunit b 2.